A 110-amino-acid polypeptide reads, in one-letter code: Protein RnfH (110 aa).

The interval 90 to 110 (VDKTRREGSIEGRKWLPKDSR) is disordered.

The protein belongs to the UPF0125 (RnfH) family.

This Burkholderia mallei (strain NCTC 10229) protein is Protein RnfH.